The sequence spans 92 residues: Small ribosomal subunit protein uS19c (92 aa).

Belongs to the universal ribosomal protein uS19 family.

The protein localises to the plastid. Its subcellular location is the chloroplast. In terms of biological role, protein S19 forms a complex with S13 that binds strongly to the 16S ribosomal RNA. This Physcomitrium patens (Spreading-leaved earth moss) protein is Small ribosomal subunit protein uS19c.